A 103-amino-acid polypeptide reads, in one-letter code: Carboxysome shell protein CsoS1 (103 aa).

The BMC domain maps to 9 to 94 (ALGMIETRGL…PHREVEPALG (86 aa)).

The protein belongs to the bacterial microcompartments protein family. CsoS1 subfamily. As to quaternary structure, homohexamer with a small central pore. Forms a CsoS2-CsoS1-RuBisCO complex.

It localises to the carboxysome. Functionally, one of the shell proteins of the carboxysome, a polyhedral inclusion where RuBisCO (ribulose bisphosphate carboxylase, ccbL-ccbS) is sequestered. Assembles into hexamers which make sheets that form the facets of the polyhedral carboxysome. The sequence is that of Carboxysome shell protein CsoS1 from Prochlorococcus marinus (strain MIT 9313).